The sequence spans 137 residues: Protein cornichon homolog 3 (137 aa).

3 consecutive transmembrane segments (helical) span residues 8–28, 54–74, and 113–133; these read IISFLILITLLGLIVYQLISL, ILQGFLCVFYLVTGHWFMALL, and LAYIILTLFLTIFWLIYSTLD.

Belongs to the cornichon family.

The protein resides in the membrane. The chain is Protein cornichon homolog 3 from Arabidopsis thaliana (Mouse-ear cress).